Consider the following 116-residue polypeptide: NADH-ubiquinone oxidoreductase chain 3 (116 aa).

The next 3 helical transmembrane spans lie at 10–30 (FLTL…TFAA), 64–84 (FFLV…LFPL), and 88–108 (VFFH…FEWV).

This sequence belongs to the complex I subunit 3 family.

Its subcellular location is the mitochondrion membrane. It carries out the reaction a ubiquinone + NADH + 5 H(+)(in) = a ubiquinol + NAD(+) + 4 H(+)(out). In terms of biological role, core subunit of the mitochondrial membrane respiratory chain NADH dehydrogenase (Complex I) that is believed to belong to the minimal assembly required for catalysis. Complex I functions in the transfer of electrons from NADH to the respiratory chain. The immediate electron acceptor for the enzyme is believed to be ubiquinone. The chain is NADH-ubiquinone oxidoreductase chain 3 (ND3) from Patiria pectinifera (Starfish).